A 270-amino-acid polypeptide reads, in one-letter code: 3-methyl-2-oxobutanoate hydroxymethyltransferase (270 aa).

Mg(2+) is bound by residues aspartate 50 and aspartate 89. 3-methyl-2-oxobutanoate contacts are provided by residues 50-51 (DS), aspartate 89, and lysine 118. Glutamate 120 lines the Mg(2+) pocket. Residue glutamate 187 is the Proton acceptor of the active site.

It belongs to the PanB family. As to quaternary structure, homodecamer; pentamer of dimers. The cofactor is Mg(2+).

It localises to the cytoplasm. The catalysed reaction is 3-methyl-2-oxobutanoate + (6R)-5,10-methylene-5,6,7,8-tetrahydrofolate + H2O = 2-dehydropantoate + (6S)-5,6,7,8-tetrahydrofolate. The protein operates within cofactor biosynthesis; (R)-pantothenate biosynthesis; (R)-pantoate from 3-methyl-2-oxobutanoate: step 1/2. Functionally, catalyzes the reversible reaction in which hydroxymethyl group from 5,10-methylenetetrahydrofolate is transferred onto alpha-ketoisovalerate to form ketopantoate. This chain is 3-methyl-2-oxobutanoate hydroxymethyltransferase, found in Helicobacter pylori (strain Shi470).